The following is a 502-amino-acid chain: CBL-interacting serine/threonine-protein kinase 13 (502 aa).

The tract at residues 32 to 51 is disordered; sequence TNKETSTPESPRSPRTPQGS. The segment covering 35–48 has biased composition (low complexity); that stretch reads ETSTPESPRSPRTP. The 255-residue stretch at 57 to 311 folds into the Protein kinase domain; it reads YEIGKLLGHG…IPEIMKHRWF (255 aa). ATP contacts are provided by residues 63 to 71 and K86; that span reads LGHGSFAKV. D179 functions as the Proton acceptor in the catalytic mechanism. The segment at 197-226 is activation loop; it reads DFGLSVVSEQLKQEGICQTFCGTPAYLAPE. Residue S201 is modified to Phosphoserine. Position 215 is a phosphothreonine (T215). The disordered stretch occupies residues 331 to 359; the sequence is DDDNDDDDSSSLSSGRSSTASEGDAEFDI. Residues 340-352 are compositionally biased toward low complexity; sequence SSLSSGRSSTASE. An NAF domain is found at 366-387; sequence PRPASLNAFDILSFSDLSGLFE. A PPI region spans residues 390–419; sequence GQGARFVSAAPMTKIISKLEEIAKEVKFMV.

The protein belongs to the protein kinase superfamily. CAMK Ser/Thr protein kinase family. SNF1 subfamily. In terms of assembly, interacts with CBL2 and CBL3. Mn(2+) is required as a cofactor.

The catalysed reaction is L-seryl-[protein] + ATP = O-phospho-L-seryl-[protein] + ADP + H(+). It carries out the reaction L-threonyl-[protein] + ATP = O-phospho-L-threonyl-[protein] + ADP + H(+). Functionally, CIPK serine-threonine protein kinases interact with CBL proteins. Binding of a CBL protein to the regulatory NAF domain of CIPK protein lead to the activation of the kinase in a calcium-dependent manner. The chain is CBL-interacting serine/threonine-protein kinase 13 (CIPK13) from Arabidopsis thaliana (Mouse-ear cress).